Consider the following 156-residue polypeptide: SsrA-binding protein (156 aa).

Residues 135 to 150 (KRDTIKDREWQRDRSR) show a composition bias toward basic and acidic residues. Residues 135–156 (KRDTIKDREWQRDRSRIMKKNT) form a disordered region.

This sequence belongs to the SmpB family.

The protein resides in the cytoplasm. Required for rescue of stalled ribosomes mediated by trans-translation. Binds to transfer-messenger RNA (tmRNA), required for stable association of tmRNA with ribosomes. tmRNA and SmpB together mimic tRNA shape, replacing the anticodon stem-loop with SmpB. tmRNA is encoded by the ssrA gene; the 2 termini fold to resemble tRNA(Ala) and it encodes a 'tag peptide', a short internal open reading frame. During trans-translation Ala-aminoacylated tmRNA acts like a tRNA, entering the A-site of stalled ribosomes, displacing the stalled mRNA. The ribosome then switches to translate the ORF on the tmRNA; the nascent peptide is terminated with the 'tag peptide' encoded by the tmRNA and targeted for degradation. The ribosome is freed to recommence translation, which seems to be the essential function of trans-translation. This Legionella pneumophila (strain Corby) protein is SsrA-binding protein.